The sequence spans 162 residues: CASP-like protein 0U1 (162 aa).

Residues 1–11 (MAAVEAAKTPR) lie on the Cytoplasmic side of the membrane. The chain crosses the membrane as a helical span at residues 12–32 (FILLIIEWVFALVAFAVMGHY). At 33 to 43 (LFDDRRSSFEY) the chain is on the extracellular side. A helical transmembrane segment spans residues 44 to 64 (LTAICILVWLVVMIYMVILCC). The Cytoplasmic portion of the chain corresponds to 65–69 (GRALP). A helical membrane pass occupies residues 70–90 (PLIEAAIFLLFAILVFIAFLV). The Extracellular portion of the chain corresponds to 91-123 (TAVKCNNSETIVIAGQTISRKVCEGESEPKAAA). A glycan (N-linked (GlcNAc...) asparagine) is linked at N96. Residues 124-144 (AFAFLLGLLLAGSSVLGCIAF) form a helical membrane-spanning segment. Topologically, residues 145-162 (RRPSAPPLSSFQNPTSSV) are cytoplasmic.

This sequence belongs to the Casparian strip membrane proteins (CASP) family. In terms of assembly, homodimer and heterodimers.

It localises to the cell membrane. This chain is CASP-like protein 0U1, found in Chlorokybus atmophyticus (Soil alga).